The primary structure comprises 38 residues: Large ribosomal subunit protein bL36 (38 aa).

The protein belongs to the bacterial ribosomal protein bL36 family.

The protein is Large ribosomal subunit protein bL36 of Myxococcus xanthus (strain DK1622).